A 1025-amino-acid chain; its full sequence is Multidrug resistance protein MdtC (1025 aa).

The next 12 membrane-spanning stretches (helical) occupy residues 3–23 (FFAL…AITL), 333–353 (EVEQ…FLFL), 360–380 (LIPA…MYLC), 387–407 (LSLM…IVVL), 431–451 (VGFT…PLLL), 463–483 (FAVT…TLTP), 528–548 (IVGL…ITIP), 853–873 (VILI…LYES), 875–895 (VHPL…LLAL), 897–917 (LFDA…IGIV), 953–973 (PIMM…ISSG), and 984–1004 (ITIV…TPVV).

Belongs to the resistance-nodulation-cell division (RND) (TC 2.A.6) family. MdtC subfamily. Part of a tripartite efflux system composed of MdtA, MdtB and MdtC. MdtC forms a heteromultimer with MdtB.

It is found in the cell inner membrane. This Enterobacter sp. (strain 638) protein is Multidrug resistance protein MdtC.